We begin with the raw amino-acid sequence, 585 residues long: Protein FAM13C (585 aa).

Disordered regions lie at residues P26–K45, S83–K138, and E171–D216. 2 stretches are compositionally biased toward basic and acidic residues: residues V27–K45 and E99–H112. Position 131 is a phosphoserine (S131). S238 is subject to Phosphoserine. Disordered regions lie at residues F250–E282, E349–P391, and I441–T477. Residues S262 to C275 show a composition bias toward polar residues. A phosphoserine mark is found at S385 and S386.

It belongs to the FAM13 family.

This Homo sapiens (Human) protein is Protein FAM13C (FAM13C).